The chain runs to 312 residues: Olfactory receptor 13J1 (312 aa).

At 1 to 25 (MEPLNRTEVSEFFLKGFSGYPALEH) the chain is on the extracellular side. An N-linked (GlcNAc...) asparagine glycan is attached at asparagine 5. The helical transmembrane segment at 26-46 (LLFPLCSAMYLVTLLGNTAIM) threads the bilayer. Topologically, residues 47–54 (AVSVLDIH) are cytoplasmic. The chain crosses the membrane as a helical span at residues 55 to 75 (LHTPVYFFLGNLSTLDICYTP). Topologically, residues 76–99 (TFVPLMLVHLLSSRKTISFAVCAI) are extracellular. A disulfide bridge connects residues cysteine 97 and cysteine 189. The helical transmembrane segment at 100–120 (QMCLSLSTGSTECLLLAITAY) threads the bilayer. Topologically, residues 121 to 139 (DRYLAICQPLRYHVLMSHR) are cytoplasmic. A helical transmembrane segment spans residues 140-160 (LCVLLMGAAWVLCLLKSVTEM). The Extracellular segment spans residues 161–197 (VISMRLPFCGHHVVSHFTCKILAVLKLACGNTSVSED). Asparagine 191 carries N-linked (GlcNAc...) asparagine glycosylation. A helical transmembrane segment spans residues 198-217 (FLLAGSILLLPVPLAFICLS). The Cytoplasmic segment spans residues 218-237 (YLLILATILRVPSAARCCKA). The chain crosses the membrane as a helical span at residues 238–258 (FSTCLAHLAVVLLFYGTIIFM). The Extracellular segment spans residues 259–271 (YLKPKSKEAHISD). A helical transmembrane segment spans residues 272 to 292 (EVFTVLYAMVTTMLNPTIYSL). At 293–312 (RNKEVKEAARKVWGRSRASR) the chain is on the cytoplasmic side.

This sequence belongs to the G-protein coupled receptor 1 family.

Its subcellular location is the cell membrane. Functionally, odorant receptor. The polypeptide is Olfactory receptor 13J1 (OR13J1) (Homo sapiens (Human)).